The chain runs to 670 residues: Solute carrier organic anion transporter family member 1A6 (670 aa).

The Cytoplasmic portion of the chain corresponds to Met1 to Lys20. Residues Val21–Met40 traverse the membrane as a helical segment. The Extracellular segment spans residues Ser41–Gly59. Asn52 is a glycosylation site (N-linked (GlcNAc...) asparagine). The chain crosses the membrane as a helical span at residues Leu60 to Gly80. The Cytoplasmic segment spans residues Thr81–Pro86. The chain crosses the membrane as a helical span at residues Ile87 to Gly111. At Arg112–Ser155 the chain is on the extracellular side. Residues Asn124 and Asn135 are each glycosylated (N-linked (GlcNAc...) asparagine). A helical membrane pass occupies residues Leu156 to Glu184. The Cytoplasmic portion of the chain corresponds to Asp185 to Lys203. The helical transmembrane segment at Met204–Thr224 threads the bilayer. Residues Gly225–Val242 lie on the Extracellular side of the membrane. A helical transmembrane segment spans residues Gly243–Pro267. The Cytoplasmic portion of the chain corresponds to Lys268 to Asn311. A helical transmembrane segment spans residues Leu312–Ala333. The Extracellular portion of the chain corresponds to Asn334–Lys353. Residues Ala354–Met377 traverse the membrane as a helical segment. At Lys378 to Lys381 the chain is on the cytoplasmic side. A helical membrane pass occupies residues Ile382 to Asn405. The Extracellular portion of the chain corresponds to Phe406–Phe513. In terms of domain architecture, Kazal-like spans Asn433 to Arg488. Intrachain disulfides connect Cys439-Cys469, Cys445-Cys465, and Cys454-Cys486. N-linked (GlcNAc...) asparagine glycosylation is found at Asn483 and Asn492. Residues Leu514–Leu536 form a helical membrane-spanning segment. Over Arg537–Ser545 the chain is Cytoplasmic. A helical membrane pass occupies residues Leu546–Ile571. The Extracellular segment spans residues Asp572 to Pro605. A helical transmembrane segment spans residues Ala606 to Ile623. Topologically, residues Arg624–Leu670 are cytoplasmic. At Thr632 the chain carries Phosphothreonine. The segment at Asp633 to Leu670 is disordered. Phosphoserine occurs at positions 634 and 635. The segment covering Ala640 to Leu670 has biased composition (basic and acidic residues).

Belongs to the organo anion transporter (TC 2.A.60) family. As to expression, kidney specific.

The protein resides in the cell membrane. In terms of biological role, may mediate the Na(+)-independent transport of organic anions. The sequence is that of Solute carrier organic anion transporter family member 1A6 (Slco1a6) from Mus musculus (Mouse).